A 298-amino-acid chain; its full sequence is Short-chain dehydrogenase/reductase prx6 (298 aa).

NADP(+) contacts are provided by isoleucine 27, aspartate 70, asparagine 97, tyrosine 174, lysine 178, valine 208, and threonine 210. Tyrosine 174 serves as the catalytic Proton acceptor. Residue lysine 178 is the Lowers pKa of active site Tyr of the active site.

Belongs to the short-chain dehydrogenases/reductases (SDR) family.

It functions in the pathway sesquiterpene biosynthesis. In terms of biological role, short-chain dehydrogenase/reductase; part of the gene cluster that mediates the biosynthesis of PR-toxin, a bicyclic sesquiterpene belonging to the eremophilane class and acting as a mycotoxin. The first step of the pathway is catalyzed by the aristolochene synthase which performs the cyclization of trans,trans-farnesyl diphosphate (FPP) to the bicyclic sesquiterpene aristolochene. Following the formation of aristolochene, the non-oxygenated aristolochene is converted to the trioxygenated intermediate eremofortin B, via 7-epi-neopetasone. This conversion appears to involve three enzymes, a hydroxysterol oxidase-like enzyme, the quinone-oxidase prx3 that forms the quinone-type-structure in the bicyclic nucleus of aristolochene with the C8-oxo group and the C-3 hydroxyl group, and the P450 monooxygenase prx9 that introduces the epoxide at the double bond between carbons 1 and 2. No monoxy or dioxy-intermediates have been reported to be released to the broth, so these three early oxidative reactions may be coupled together. Eremofortin B is further oxidized by another P450 monooxygenase, that introduces a second epoxide between carbons 7 and 11 prior to acetylation to eremofortin A by the acetyltransferase prx11. The second epoxidation may be performed by a second P450 monooxygenase. After the acetylation step, eremofortin A is converted to eremofortin C and then to PR-toxin. First the conversion of eremofortin A to eremofortin C proceeds by oxidation of the side chain of the molecule at C-12 and is catalyzed by the short-chain oxidoreductase prx1. The cytochrome P450 monooxygenase prx8 also plays a role in this step. The primary alcohol formed at C-12 is finally oxidized by the short-chain alcohol dehydrogenase prx4 that forms PR-toxin. In Penicillium rubens (strain ATCC 28089 / DSM 1075 / NRRL 1951 / Wisconsin 54-1255) (Penicillium chrysogenum), this protein is Short-chain dehydrogenase/reductase prx6.